Here is a 498-residue protein sequence, read N- to C-terminus: Protein flp (498 aa).

4 helical membrane passes run 6 to 26, 389 to 409, 433 to 453, and 471 to 491; these read LYFL…IYIT, FNIV…FSAY, LSLC…YLIL, and LALI…LLFL.

It is found in the cell membrane. Functionally, its precise function is unknown. Has no penicillin-binding activity and is not involved in methicillin resistance. In Staphylococcus aureus (strain COL), this protein is Protein flp (flp).